Reading from the N-terminus, the 476-residue chain is CDK5 and ABL1 enzyme substrate 2 (476 aa).

The tract at residues 1–119 is disordered; that stretch reads MAAAAAGGAP…GLGLDGQRQR (119 aa). Residues 30-40 are compositionally biased toward basic residues; it reads PRRRGDSRRRQ. Positions 65 to 96 are enriched in pro residues; it reads PAPPPPPPTEAREAPAPPPAPPGGLPGLPARP. 2 positions are modified to phosphoserine: Ser-128 and Ser-206. Positions 256-295 are disordered; that stretch reads DSHGLLPQPRPSIPRAPPGSRHKPVPTKSTPAGTELGSDG. Residues 263–272 are compositionally biased toward pro residues; sequence QPRPSIPRAP.

Belongs to the cyclin family. Binds to CDK3, CDK5 and ABL1. The C-terminal cyclin-box-like region binds to CDK5. As to expression, widely expressed.

Unknown. Probably involved in G1-S cell cycle transition. In Mus musculus (Mouse), this protein is CDK5 and ABL1 enzyme substrate 2 (Cables2).